The chain runs to 377 residues: Cytochrome b (377 aa).

Transmembrane regions (helical) follow at residues 36 to 56 (WGSL…FLAM), 80 to 102 (WLIR…LHMA), 115 to 135 (VWLI…MGYI), and 181 to 201 (FFVL…IHLI). Heme b is bound by residues H86 and H100. Heme b contacts are provided by H185 and H199. H204 provides a ligand contact to a ubiquinone. A run of 4 helical transmembrane segments spans residues 227–247 (YSSK…VIIF), 291–311 (LGGV…PFIS), 326–346 (LFWS…MPVV), and 354–374 (LTST…FLMI).

This sequence belongs to the cytochrome b family. The main subunits of complex b-c1 are: cytochrome b, cytochrome c1 and the Rieske protein. Heme b is required as a cofactor.

It localises to the mitochondrion inner membrane. Functionally, component of the ubiquinol-cytochrome c reductase complex (complex III or cytochrome b-c1 complex) that is part of the mitochondrial respiratory chain. The b-c1 complex mediates electron transfer from ubiquinol to cytochrome c. Contributes to the generation of a proton gradient across the mitochondrial membrane that is then used for ATP synthesis. This chain is Cytochrome b (mt:Cyt-b), found in Myzostoma seymourcollegiorum (Polychaete worm).